A 148-amino-acid polypeptide reads, in one-letter code: Small ribosomal subunit protein uS15 (148 aa).

Positions 1-23 (MRKSKEKGRSGSTRPPQLKKPEW) are disordered.

It belongs to the universal ribosomal protein uS15 family. Part of the 30S ribosomal subunit.

This is Small ribosomal subunit protein uS15 from Thermofilum pendens (strain DSM 2475 / Hrk 5).